We begin with the raw amino-acid sequence, 457 residues long: Argininosuccinate lyase (457 aa).

This sequence belongs to the lyase 1 family. Argininosuccinate lyase subfamily.

It is found in the cytoplasm. It catalyses the reaction 2-(N(omega)-L-arginino)succinate = fumarate + L-arginine. It functions in the pathway amino-acid biosynthesis; L-arginine biosynthesis; L-arginine from L-ornithine and carbamoyl phosphate: step 3/3. In Escherichia coli O157:H7 (strain EC4115 / EHEC), this protein is Argininosuccinate lyase.